Reading from the N-terminus, the 1005-residue chain is Translation initiation factor IF-2 (1005 aa).

2 disordered regions span residues 54–337 and 368–414; these read KYVP…RRPQ and PKPK…PTSV. Polar residues predominate over residues 58–73; that stretch reads SPSTHSMPPTRPTSHS. Pro residues predominate over residues 75–86; sequence PLPPQPGKPQPK. Positions 146-157 are enriched in polar residues; sequence GSNSPSHSESTP. Low complexity-rich tracts occupy residues 189-198 and 222-240; these read PSPAAMAGRA and VESA…PRAE. Over residues 258 to 274 the composition is skewed to basic and acidic residues; it reads PRSETSEDGARRGEKLV. Residues 392-401 show a composition bias toward basic residues; it reads GGRKLSRRDR. Residues 495–668 form the tr-type G domain; the sequence is RRPPVVTIMG…LLVSEVEDLY (174 aa). The tract at residues 504-511 is G1; that stretch reads GHVDHGKT. 504–511 provides a ligand contact to GTP; sequence GHVDHGKT. The interval 529–533 is G2; the sequence is GITQH. Positions 554–557 are G3; the sequence is DTPG. GTP is bound by residues 554 to 558 and 608 to 611; these read DTPGH and NKID. The tract at residues 608–611 is G4; it reads NKID. The interval 644-646 is G5; that stretch reads SAI.

It belongs to the TRAFAC class translation factor GTPase superfamily. Classic translation factor GTPase family. IF-2 subfamily.

It is found in the cytoplasm. One of the essential components for the initiation of protein synthesis. Protects formylmethionyl-tRNA from spontaneous hydrolysis and promotes its binding to the 30S ribosomal subunits. Also involved in the hydrolysis of GTP during the formation of the 70S ribosomal complex. The protein is Translation initiation factor IF-2 of Cyanothece sp. (strain PCC 7425 / ATCC 29141).